The primary structure comprises 339 residues: uncharacterized protein (339 aa).

The first 29 residues, 1–29, serve as a signal peptide directing secretion; it reads MIKQVCKNITICSLALSTALTVFPASSYA.

Belongs to the aerolysin family.

This is an uncharacterized protein from Staphylococcus aureus (strain MRSA252).